A 370-amino-acid polypeptide reads, in one-letter code: 3-dehydroquinate synthase (370 aa).

Residues 112–116 (GVVGD), 136–137 (TS), K149, K158, and 176–179 (TLRT) each bind NAD(+). Positions 191, 254, and 276 each coordinate Zn(2+).

The protein belongs to the sugar phosphate cyclases superfamily. Dehydroquinate synthase family. The cofactor is Co(2+). Zn(2+) is required as a cofactor. NAD(+) serves as cofactor.

Its subcellular location is the cytoplasm. It carries out the reaction 7-phospho-2-dehydro-3-deoxy-D-arabino-heptonate = 3-dehydroquinate + phosphate. Its pathway is metabolic intermediate biosynthesis; chorismate biosynthesis; chorismate from D-erythrose 4-phosphate and phosphoenolpyruvate: step 2/7. Catalyzes the conversion of 3-deoxy-D-arabino-heptulosonate 7-phosphate (DAHP) to dehydroquinate (DHQ). This is 3-dehydroquinate synthase from Xanthomonas campestris pv. campestris (strain 8004).